Here is a 551-residue protein sequence, read N- to C-terminus: Solute carrier family 22 member 3 (551 aa).

Residues 21–41 form a helical membrane-spanning segment; the sequence is VFLLLCLTGVTFAFLFVGVVF. N-linked (GlcNAc...) asparagine glycosylation is found at asparagine 72, asparagine 99, and asparagine 114. A helical transmembrane segment spans residues 177–197; it reads LIVYLISCFGVGITGVVVAFA. A glycan (N-linked (GlcNAc...) asparagine) is linked at asparagine 199. The next 2 helical transmembrane spans lie at 236 to 256 and 264 to 284; these read IVGI…PGIA and GIQL…WVVP. Residues 284–288 carry the Proline-rich sequence motif; sequence PESPR. The N-linked (GlcNAc...) asparagine glycan is linked to asparagine 317. The next 3 helical transmembrane spans lie at 376-396, 463-483, and 493-513; these read MDFF…LLTI, FGVS…PFLL, and LPLI…MLLP.

Belongs to the major facilitator (TC 2.A.1) superfamily. Organic cation transporter (TC 2.A.1.19) family. In terms of tissue distribution, highly expressed in placenta. Expressed in intestine, hear, kidney and lung. Widely expressed in brain, particularly in hippocampus, cerebellum, cerebral cortex. In the brain, expressed predominantly in regions located at the brain-cerebrospinal fluid border, with expression extending to regions that belong to monoaminergic pathways such as raphe nuclei, striatum and thalamus. In brain, expressed in neurons and glial cells of amygdala. Expression is low in kidney and lung and undetectable in liver. Expressed in Sertoli cells in testis. Expressed in tracheal and bronchial epithelium of the respiratory tract, where it localizes to the apical membrane of ciliated and brush cells, and in basal cells.

The protein localises to the cell membrane. It is found in the apical cell membrane. The protein resides in the basolateral cell membrane. It localises to the mitochondrion membrane. Its subcellular location is the endomembrane system. The protein localises to the nucleus membrane. It is found in the nucleus outer membrane. It carries out the reaction (R)-noradrenaline(out) = (R)-noradrenaline(in). The enzyme catalyses (R)-adrenaline(out) = (R)-adrenaline(in). The catalysed reaction is serotonin(out) = serotonin(in). It catalyses the reaction dopamine(out) = dopamine(in). It carries out the reaction histamine(out) = histamine(in). The enzyme catalyses tyramine(in) = tyramine(out). The catalysed reaction is guanidine(out) = guanidine(in). It catalyses the reaction agmatine(out) = agmatine(in). It carries out the reaction spermidine(in) = spermidine(out). The enzyme catalyses L-histidyl-L-proline diketopiperazine(in) = L-histidyl-L-proline diketopiperazine(out). The catalysed reaction is (R)-salsolinol(in) = (R)-salsolinol(out). Functionally, electrogenic voltage-dependent transporter that mediates the transport of a variety of organic cations such as endogenous bioactive amines, cationic drugs and xenobiotics. Cation cellular uptake or release is driven by the electrochemical potential, i.e. membrane potential and concentration gradient. Functions as a Na(+)- and Cl(-)-independent, bidirectional uniporter. Implicated in neuronal monoamine neurotransmitters cellular uptake such as dopamine, adrenaline/epinephrine, noradrenaline/norepinephrine, histamine, serotonin and tyramine, thereby supporting a role in homeostatic regulation of aminergic neurotransmission in the brain. Transports dopaminergic neuromodulators cyclo(his-pro) and salsolinol with low efficiency. May be involved in the uptake and disposition of cationic compounds by renal clearance from the blood flow. May contribute to regulate the transport of cationic compounds in testis across the blood-testis-barrier. Mediates the transport of polyamine spermidine and putrescine. Mediates the bidirectional transport of polyamine agmatine. Also transports guanidine. May also mediate intracellular transport of organic cations, thereby playing a role in amine metabolism and intracellular signaling. This chain is Solute carrier family 22 member 3, found in Rattus norvegicus (Rat).